We begin with the raw amino-acid sequence, 479 residues long: Glutamyl-tRNA reductase (479 aa).

Residues 49 to 52 (TCNR), Ser109, 114 to 116 (EQQ), and Gln120 each bind substrate. The Nucleophile role is filled by Cys50. 191 to 196 (GAGSMG) is a binding site for NADP(+).

This sequence belongs to the glutamyl-tRNA reductase family. As to quaternary structure, homodimer.

It catalyses the reaction (S)-4-amino-5-oxopentanoate + tRNA(Glu) + NADP(+) = L-glutamyl-tRNA(Glu) + NADPH + H(+). It participates in porphyrin-containing compound metabolism; protoporphyrin-IX biosynthesis; 5-aminolevulinate from L-glutamyl-tRNA(Glu): step 1/2. In terms of biological role, catalyzes the NADPH-dependent reduction of glutamyl-tRNA(Glu) to glutamate 1-semialdehyde (GSA). The chain is Glutamyl-tRNA reductase from Rhodococcus jostii (strain RHA1).